Here is a 339-residue protein sequence, read N- to C-terminus: Malate dehydrogenase 3, cytoplasmic (339 aa).

NAD(+) contacts are provided by residues 22–23, D49, and G96; that span reads NI. R105 is an oxaloacetate binding site. The NAD(+) site is built by Q119 and N138. Oxaloacetate-binding residues include N138, R169, H194, and S249. The active-site Proton acceptor is the H194.

It belongs to the LDH/MDH superfamily. MDH type 2 family. As to expression, expressed in rosette leaves at low levels.

It localises to the cytoplasm. It catalyses the reaction (S)-malate + NAD(+) = oxaloacetate + NADH + H(+). Catalyzes a reversible NAD-dependent dehydrogenase reaction involved in central metabolism and redox homeostasis between organelle compartments. The chain is Malate dehydrogenase 3, cytoplasmic from Arabidopsis thaliana (Mouse-ear cress).